The sequence spans 333 residues: Sodium/bile acid cotransporter 7 (333 aa).

Residues 1–10 are Cytoplasmic-facing; the sequence is MGLLERLRKE. Residues 11–31 form a helical membrane-spanning segment; it reads WFIAGIALVIAAARLEPAVGV. The Extracellular portion of the chain corresponds to 32-37; it reads KGGPLK. A helical membrane pass occupies residues 38 to 58; it reads PEITITYIAVSAIFFNSGLSL. Over 59–71 the chain is Cytoplasmic; it reads KTEELTSALMHVK. Residues 72-92 traverse the membrane as a helical segment; it reads LHLFVQIFTLVFFPTAIWLFL. The Extracellular portion of the chain corresponds to 93-103; that stretch reads QLLSITPINEW. The chain crosses the membrane as a helical span at residues 104–124; sequence LLKGLQTVGCMPPPVSSAVIL. Over 125-126 the chain is Cytoplasmic; the sequence is TK. Residues 127–147 form a helical membrane-spanning segment; sequence AVGGNEAAAIFNSAFGSFLLG. At 148 to 151 the chain is on the extracellular side; sequence SSSS. A helical transmembrane segment spans residues 152–172; that stretch reads VPFTSIFSQLFMTVVVPLIIG. Topologically, residues 173 to 189 are cytoplasmic; it reads QIVRRYIKDWLERRKPP. A helical membrane pass occupies residues 190–210; the sequence is FGTISSCVLLMIIYTTFCDTF. The Extracellular segment spans residues 211 to 222; it reads ANPNIDLDKFSL. Residues 223–243 traverse the membrane as a helical segment; sequence IIIVFIIFSVQMSFMFLTFLF. The Cytoplasmic portion of the chain corresponds to 244-258; sequence STRSNSGFTPADTVA. Residues 259–279 traverse the membrane as a helical segment; it reads IIFCSTHKSLTLGIPMLKIVF. At 280-286 the chain is on the extracellular side; that stretch reads AGYEHLS. The helical transmembrane segment at 287 to 307 threads the bilayer; the sequence is LISVPLLIYHPAQILLGSLLV. Topologically, residues 308-333 are cytoplasmic; it reads PTIKSWMVSRQKALKLTRQPKVPVKV.

This sequence belongs to the bile acid:sodium symporter (BASS) (TC 2.A.28) family.

Its subcellular location is the cell membrane. The protein localises to the endoplasmic reticulum membrane. It is found in the golgi apparatus membrane. In terms of biological role, involved in teeth and skeletal development. Has an essential role in the biosynthesis and trafficking of glycosaminoglycans and glycoproteins to produce a proper functioning extracellular matrix. Required for extracellular matrix mineralization. Also involved in the regulation of cellular calcium homeostasis. Does not show transport activity towards bile acids or steroid sulfates. The polypeptide is Sodium/bile acid cotransporter 7 (SLC10A7) (Gallus gallus (Chicken)).